We begin with the raw amino-acid sequence, 338 residues long: Ketol-acid reductoisomerase (NADP(+)) (338 aa).

Positions 1–181 (MNVFYDKDAD…GGGRAGIIET (181 aa)) constitute a KARI N-terminal Rossmann domain. Residues 24 to 27 (YGSQ), arginine 47, and serine 52 each bind NADP(+). Histidine 107 is a catalytic residue. An NADP(+)-binding site is contributed by glycine 133. The 146-residue stretch at 182–327 (NFREETETDL…AKLRAMMPWI (146 aa)) folds into the KARI C-terminal knotted domain. Residues aspartate 190, glutamate 194, glutamate 226, and glutamate 230 each coordinate Mg(2+). Position 251 (serine 251) interacts with substrate.

This sequence belongs to the ketol-acid reductoisomerase family. Mg(2+) serves as cofactor.

It catalyses the reaction (2R)-2,3-dihydroxy-3-methylbutanoate + NADP(+) = (2S)-2-acetolactate + NADPH + H(+). It carries out the reaction (2R,3R)-2,3-dihydroxy-3-methylpentanoate + NADP(+) = (S)-2-ethyl-2-hydroxy-3-oxobutanoate + NADPH + H(+). It participates in amino-acid biosynthesis; L-isoleucine biosynthesis; L-isoleucine from 2-oxobutanoate: step 2/4. The protein operates within amino-acid biosynthesis; L-valine biosynthesis; L-valine from pyruvate: step 2/4. Functionally, involved in the biosynthesis of branched-chain amino acids (BCAA). Catalyzes an alkyl-migration followed by a ketol-acid reduction of (S)-2-acetolactate (S2AL) to yield (R)-2,3-dihydroxy-isovalerate. In the isomerase reaction, S2AL is rearranged via a Mg-dependent methyl migration to produce 3-hydroxy-3-methyl-2-ketobutyrate (HMKB). In the reductase reaction, this 2-ketoacid undergoes a metal-dependent reduction by NADPH to yield (R)-2,3-dihydroxy-isovalerate. The chain is Ketol-acid reductoisomerase (NADP(+)) from Burkholderia ambifaria (strain MC40-6).